Consider the following 127-residue polypeptide: Large ribosomal subunit protein uL18 (127 aa).

The tract at residues 1–26 (MASTLTVRKSLSDRAKARARRQARGR) is disordered. Basic residues predominate over residues 17–26 (ARARRQARGR).

The protein belongs to the universal ribosomal protein uL18 family. Part of the 50S ribosomal subunit; part of the 5S rRNA/L5/L18/L25 subcomplex. Contacts the 5S and 23S rRNAs.

In terms of biological role, this is one of the proteins that bind and probably mediate the attachment of the 5S RNA into the large ribosomal subunit, where it forms part of the central protuberance. The protein is Large ribosomal subunit protein uL18 of Cutibacterium acnes (strain DSM 16379 / KPA171202) (Propionibacterium acnes).